The sequence spans 498 residues: Probable malate:quinone oxidoreductase 2 (498 aa).

It belongs to the MQO family. FAD is required as a cofactor.

It carries out the reaction (S)-malate + a quinone = a quinol + oxaloacetate. It functions in the pathway carbohydrate metabolism; tricarboxylic acid cycle; oxaloacetate from (S)-malate (quinone route): step 1/1. This is Probable malate:quinone oxidoreductase 2 from Staphylococcus aureus (strain MW2).